We begin with the raw amino-acid sequence, 319 residues long: Acetyl-coenzyme A carboxylase carboxyl transferase subunit alpha (319 aa).

A CoA carboxyltransferase C-terminal domain is found at 35–296; sequence NLDEEVQRLR…KAQLLADLLD (262 aa).

Belongs to the AccA family. Acetyl-CoA carboxylase is a heterohexamer composed of biotin carboxyl carrier protein (AccB), biotin carboxylase (AccC) and two subunits each of ACCase subunit alpha (AccA) and ACCase subunit beta (AccD).

It is found in the cytoplasm. The catalysed reaction is N(6)-carboxybiotinyl-L-lysyl-[protein] + acetyl-CoA = N(6)-biotinyl-L-lysyl-[protein] + malonyl-CoA. It functions in the pathway lipid metabolism; malonyl-CoA biosynthesis; malonyl-CoA from acetyl-CoA: step 1/1. Its function is as follows. Component of the acetyl coenzyme A carboxylase (ACC) complex. First, biotin carboxylase catalyzes the carboxylation of biotin on its carrier protein (BCCP) and then the CO(2) group is transferred by the carboxyltransferase to acetyl-CoA to form malonyl-CoA. This is Acetyl-coenzyme A carboxylase carboxyl transferase subunit alpha from Pectobacterium atrosepticum (strain SCRI 1043 / ATCC BAA-672) (Erwinia carotovora subsp. atroseptica).